We begin with the raw amino-acid sequence, 688 residues long: Glycine--tRNA ligase beta subunit (688 aa).

Belongs to the class-II aminoacyl-tRNA synthetase family. In terms of assembly, tetramer of two alpha and two beta subunits.

It localises to the cytoplasm. It catalyses the reaction tRNA(Gly) + glycine + ATP = glycyl-tRNA(Gly) + AMP + diphosphate. The chain is Glycine--tRNA ligase beta subunit from Aliivibrio fischeri (strain MJ11) (Vibrio fischeri).